A 979-amino-acid chain; its full sequence is Receptor-type tyrosine-protein phosphatase-like N (979 aa).

The N-terminal stretch at 1–37 is a signal peptide; that stretch reads MRRPRRPGGSGGSGGSGGLRLLVCLLLLSGRPGGCSA. The interval 38–134 is RESP18 homology domain; that stretch reads ISAHGCLFDR…HPRDRSGLVP (97 aa). At 38–575 the chain is on the lumenal side; that stretch reads ISAHGCLFDR…RQAHGISPMR (538 aa). A disulfide bridge links Cys56 with Cys65. The span at 113–130 shows a compositional bias: basic and acidic residues; sequence MERIPRLRPPEPHPRDRS. 3 disordered regions span residues 113–173, 289–330, and 392–443; these read MERI…GSPL, GRAR…AAQP, and MQRG…SSSV. Residues 145–155 show a composition bias toward polar residues; the sequence is TQGNPTGSSPA. A compositionally biased stretch (basic and acidic residues) spans 303–322; the sequence is RAEDSSEGHEEEVLGGRGEK. 2 positions are modified to phosphoserine: Ser307 and Ser308. Positions 414-424 are enriched in polar residues; sequence SPASSEVQQVL. The segment at 449 to 575 is sufficient for dimerization of proICA512; the sequence is SPLGQSQPTV…RQAHGISPMR (127 aa). Residues Asn506 and Asn524 are each glycosylated (N-linked (GlcNAc...) asparagine). Residues 576-600 traverse the membrane as a helical segment; sequence SVLLTLVALAGVAGLLVALAVALCM. A sufficient for dimerization of proICA512 region spans residues 601–732; that stretch reads RHHSRQRDKE…PNTCAAAQDE (132 aa). Residues 601-979 lie on the Cytoplasmic side of the membrane; the sequence is RHHSRQRDKE…VNAILKALPQ (379 aa). Residues 644-680 form a disordered region; the sequence is RAEGQPEPSRVSSVSSQFSDAAQASPSSHSSTPSWCE. A compositionally biased stretch (low complexity) spans 648–677; it reads QPEPSRVSSVSSQFSDAAQASPSSHSSTPS. A Tyrosine-protein phosphatase domain is found at 709 to 969; it reads LAKEWQALCA…EFALTAVAEE (261 aa). A Glycyl lysine isopeptide (Lys-Gly) (interchain with G-Cter in SUMO) cross-link involves residue Lys754.

Belongs to the protein-tyrosine phosphatase family. Receptor class 8 subfamily. In terms of assembly, homodimer; shown for the unprocessed protein (proICA512) in the endoplasmic reticulum and resolved during protein maturation as ICA512-TMF seems to be predominantly monomeric in secretory granules; however, ICA512-CCF interacts with ICA512-TMF disrupting the ICA512-TMF:SNTB2 complex. The isolated lumenal RESP18 homology domain has been shown to form disulfide-linked homooligomers. Interacts (via cytoplasmic domain) with phosphorylated SNTB2; this protects PTPRN against cleavage by CAPN1 to produce ICA512-CCF. Dephosphorylation of SNTB2 upon insulin stimulation disrupts the interaction and results in PTPRN cleavage. Interacts with SNX19. ICA512-CCF interacts with PIAS4; in the nucleus. Interacts with STAT5B (phosphorylated); down-regulated by ICA512-CCF sumoylation; ICA512-CCF prevents STAT5B dephosphorylation; ICA512-CCF mediates interaction of STAT5B with PIAS4. Interacts (via RESP18 homology domain) with insulin and proinsulin. Interacts with PTPRN2, PTPRA and PTPRE. Subject to proteolytic cleavage at multiple sites. Subject to cleavage on a pair of basic residues. On exocytosis of secretory granules in pancreatic beta-cells ICA512-TMF is transiently inserted in the plasma-membrane and cleaved by mu-type calpain CPN1 to yield ICA512-CCF. Post-translationally, O-glycosylated. In terms of processing, N-glycosylated. Sumoylated at two sites including Lys-754. Sumoylation decreases interaction with STAT5. In terms of tissue distribution, detected in pituitary. Detected in brain (at protein level). Detected in brain. Weakly expressed in the colon, intestine, stomach and pancreas.

The protein localises to the membrane. Its subcellular location is the cytoplasmic vesicle. It localises to the secretory vesicle membrane. The protein resides in the perikaryon. It is found in the cell projection. The protein localises to the axon. Its subcellular location is the synapse. It localises to the cell membrane. The protein resides in the endosome. It is found in the nucleus. Plays a role in vesicle-mediated secretory processes. Required for normal accumulation of secretory vesicles in hippocampus, pituitary and pancreatic islets. Required for the accumulation of normal levels of insulin-containing vesicles and preventing their degradation. Plays a role in insulin secretion in response to glucose stimuli. Required for normal accumulation of the neurotransmitters norepinephrine, dopamine and serotonin in the brain. In females, but not in males, required for normal accumulation and secretion of pituitary hormones, such as luteinizing hormone (LH) and follicle-stimulating hormone (FSH). Seems to lack intrinsic enzyme activity. Required to maintain normal levels of renin expression and renin release. May regulate catalytic active protein-tyrosine phosphatases such as PTPRA through dimerization. Its function is as follows. ICA512-TMF regulates dynamics and exocytosis of insulin secretory granules (SGs); binding of ICA512-TMF to SNTB2/beta-2-syntrophin is proposed to restrain SGs mobility and exocytosis by tethering them to the actin cytoskeleton depending on UTRN; the function is inhibited by cytoplasmic ICA512-CFF dimerizing with ICA512-TMF and displacing SNTB2. Functionally, ICA512-CCF translocated to the nucleus promotes expression of insulin and other granule-related genes; the function implicates binding to and regulating activity of STAT5B probably by preventing its dephosphorylation and potentially by inducing its sumoylation by recruiting PIAS4. Enhances pancreatic beta-cell proliferation by converging with signaling by STAT5B and STAT3. ICA512-CCF located in the cytoplasm regulates dynamics and exocytosis of insulin secretory granules (SGs) by dimerizing with ICA512-TMF and displacing SNTB2 thus enhancing SGs mobility and exocytosis. The protein is Receptor-type tyrosine-protein phosphatase-like N (Ptprn) of Mus musculus (Mouse).